Reading from the N-terminus, the 245-residue chain is 5-oxoprolinase subunit A (245 aa).

It belongs to the LamB/PxpA family. As to quaternary structure, forms a complex composed of PxpA, PxpB and PxpC.

It catalyses the reaction 5-oxo-L-proline + ATP + 2 H2O = L-glutamate + ADP + phosphate + H(+). Catalyzes the cleavage of 5-oxoproline to form L-glutamate coupled to the hydrolysis of ATP to ADP and inorganic phosphate. The polypeptide is 5-oxoprolinase subunit A (Yersinia pseudotuberculosis serotype O:1b (strain IP 31758)).